Consider the following 435-residue polypeptide: NADH-quinone oxidoreductase subunit D 2 (435 aa).

The protein belongs to the complex I 49 kDa subunit family. NDH-1 is composed of 14 different subunits. Subunits NuoB, C, D, E, F, and G constitute the peripheral sector of the complex.

The protein resides in the cell inner membrane. It catalyses the reaction a quinone + NADH + 5 H(+)(in) = a quinol + NAD(+) + 4 H(+)(out). Functionally, NDH-1 shuttles electrons from NADH, via FMN and iron-sulfur (Fe-S) centers, to quinones in the respiratory chain. The immediate electron acceptor for the enzyme in this species is believed to be ubiquinone. Couples the redox reaction to proton translocation (for every two electrons transferred, four hydrogen ions are translocated across the cytoplasmic membrane), and thus conserves the redox energy in a proton gradient. The sequence is that of NADH-quinone oxidoreductase subunit D 2 from Stenotrophomonas maltophilia (strain R551-3).